Here is a 180-residue protein sequence, read N- to C-terminus: Crossover junction endodeoxyribonuclease RuvC (180 aa).

Residues Asp7, Glu66, and Asp138 contribute to the active site. Residues Asp7, Glu66, and Asp138 each coordinate Mg(2+).

This sequence belongs to the RuvC family. In terms of assembly, homodimer which binds Holliday junction (HJ) DNA. The HJ becomes 2-fold symmetrical on binding to RuvC with unstacked arms; it has a different conformation from HJ DNA in complex with RuvA. In the full resolvosome a probable DNA-RuvA(4)-RuvB(12)-RuvC(2) complex forms which resolves the HJ. Mg(2+) is required as a cofactor.

It is found in the cytoplasm. It catalyses the reaction Endonucleolytic cleavage at a junction such as a reciprocal single-stranded crossover between two homologous DNA duplexes (Holliday junction).. The RuvA-RuvB-RuvC complex processes Holliday junction (HJ) DNA during genetic recombination and DNA repair. Endonuclease that resolves HJ intermediates. Cleaves cruciform DNA by making single-stranded nicks across the HJ at symmetrical positions within the homologous arms, yielding a 5'-phosphate and a 3'-hydroxyl group; requires a central core of homology in the junction. The consensus cleavage sequence is 5'-(A/T)TT(C/G)-3'. Cleavage occurs on the 3'-side of the TT dinucleotide at the point of strand exchange. HJ branch migration catalyzed by RuvA-RuvB allows RuvC to scan DNA until it finds its consensus sequence, where it cleaves and resolves the cruciform DNA. The polypeptide is Crossover junction endodeoxyribonuclease RuvC (Burkholderia orbicola (strain AU 1054)).